Reading from the N-terminus, the 155-residue chain is Small ribosomal subunit protein uS7cz/uS7cy (155 aa).

This sequence belongs to the universal ribosomal protein uS7 family. Part of the 30S ribosomal subunit.

The protein localises to the plastid. It is found in the chloroplast. One of the primary rRNA binding proteins, it binds directly to 16S rRNA where it nucleates assembly of the head domain of the 30S subunit. This is Small ribosomal subunit protein uS7cz/uS7cy (rps7-A) from Nandina domestica (Heavenly bamboo).